A 526-amino-acid polypeptide reads, in one-letter code: Peptide chain release factor 3 (526 aa).

The 269-residue stretch at 9–277 (DKRRTFAIIS…GIVEWAPRPQ (269 aa)) folds into the tr-type G domain. GTP-binding positions include 18-25 (SHPDAGKT), 86-90 (DTPGH), and 140-143 (NKLD).

It belongs to the TRAFAC class translation factor GTPase superfamily. Classic translation factor GTPase family. PrfC subfamily.

The protein localises to the cytoplasm. In terms of biological role, increases the formation of ribosomal termination complexes and stimulates activities of RF-1 and RF-2. It binds guanine nucleotides and has strong preference for UGA stop codons. It may interact directly with the ribosome. The stimulation of RF-1 and RF-2 is significantly reduced by GTP and GDP, but not by GMP. In Shewanella loihica (strain ATCC BAA-1088 / PV-4), this protein is Peptide chain release factor 3.